We begin with the raw amino-acid sequence, 208 residues long: Guanylate kinase (208 aa).

The Guanylate kinase-like domain occupies 4–185; it reads GNLYILSAPS…ALADFQAILR (182 aa). Position 11 to 18 (11 to 18) interacts with ATP; it reads APSGAGKS.

This sequence belongs to the guanylate kinase family.

Its subcellular location is the cytoplasm. The catalysed reaction is GMP + ATP = GDP + ADP. Functionally, essential for recycling GMP and indirectly, cGMP. This chain is Guanylate kinase (gmk), found in Pasteurella multocida (strain Pm70).